The chain runs to 79 residues: Defensin-like protein 54 (79 aa).

Positions 1–27 (MGIKKTSATVFLVIILTISFSYYDVEA) are cleaved as a signal peptide. Disulfide bonds link C39/C76, C43/C67, C52/C74, and C56/C75.

This sequence belongs to the DEFL family.

It localises to the secreted. In Arabidopsis thaliana (Mouse-ear cress), this protein is Defensin-like protein 54.